A 364-amino-acid polypeptide reads, in one-letter code: Dihydroorotate dehydrogenase (quinone) (364 aa).

FMN is bound by residues 61 to 65 and threonine 85; that span reads AGYDK. Lysine 65 is a substrate binding site. 110 to 114 contributes to the substrate binding site; it reads NRLGF. The FMN site is built by asparagine 139 and asparagine 170. Asparagine 170 serves as a coordination point for substrate. The active-site Nucleophile is serine 173. Asparagine 175 serves as a coordination point for substrate. Residues lysine 215 and serine 243 each contribute to the FMN site. Residue 244–245 coordinates substrate; the sequence is NT. Residues glycine 266, glycine 295, and 316–317 contribute to the FMN site; that span reads YT.

The protein belongs to the dihydroorotate dehydrogenase family. Type 2 subfamily. Monomer. FMN serves as cofactor.

Its subcellular location is the cell membrane. It carries out the reaction (S)-dihydroorotate + a quinone = orotate + a quinol. Its pathway is pyrimidine metabolism; UMP biosynthesis via de novo pathway; orotate from (S)-dihydroorotate (quinone route): step 1/1. In terms of biological role, catalyzes the conversion of dihydroorotate to orotate with quinone as electron acceptor. The polypeptide is Dihydroorotate dehydrogenase (quinone) (Brucella abortus (strain S19)).